A 129-amino-acid chain; its full sequence is MRHRKSGRQLNRNSSHRQAMFRNMAGSLVRHEIIKTTLPKAKELRRVVEPLITLAKTDSVANRRLAFARTRDNEIVAKLFNELGPRFASRAGGYTRILKCGFRAGDNAPMAYIELVDRAASQAEVVAAE.

The protein belongs to the bacterial ribosomal protein bL17 family. Part of the 50S ribosomal subunit. Contacts protein L32.

This is Large ribosomal subunit protein bL17 from Yersinia enterocolitica serotype O:8 / biotype 1B (strain NCTC 13174 / 8081).